The following is a 301-amino-acid chain: Probable alpha-L-glutamate ligase (301 aa).

Residues 104–287 (LQLLSRRGIG…VAGMIIEYLE (184 aa)) enclose the ATP-grasp domain. Residues Lys-141, 178–179 (EY), Asp-187, and 211–213 (RSN) contribute to the ATP site. Mg(2+) contacts are provided by Asp-248, Glu-260, and Asn-262. Positions 248, 260, and 262 each coordinate Mn(2+).

It belongs to the RimK family. The cofactor is Mg(2+). Requires Mn(2+) as cofactor.

This Pseudomonas savastanoi pv. phaseolicola (strain 1448A / Race 6) (Pseudomonas syringae pv. phaseolicola (strain 1448A / Race 6)) protein is Probable alpha-L-glutamate ligase.